We begin with the raw amino-acid sequence, 207 residues long: Large ribosomal subunit protein bL25 (207 aa).

The tract at residues 171 to 207 is disordered; it reads EEETVVTVSAPRAEEEPTTTEAPEPEAVHGKDEEPVE. Positions 196 to 207 are enriched in basic and acidic residues; sequence EAVHGKDEEPVE.

The protein belongs to the bacterial ribosomal protein bL25 family. CTC subfamily. In terms of assembly, part of the 50S ribosomal subunit; part of the 5S rRNA/L5/L18/L25 subcomplex. Contacts the 5S rRNA. Binds to the 5S rRNA independently of L5 and L18.

Functionally, this is one of the proteins that binds to the 5S RNA in the ribosome where it forms part of the central protuberance. The polypeptide is Large ribosomal subunit protein bL25 (Listeria monocytogenes serotype 4b (strain F2365)).